The primary structure comprises 435 residues: Shikimate O-hydroxycinnamoyltransferase (435 aa).

Residues His153 and Asp382 each act as proton acceptor in the active site.

It belongs to the plant acyltransferase family. In terms of tissue distribution, highly expressed in stem vascular tissues.

The enzyme catalyses shikimate + 4-coumaroyl-CoA = trans-4-coumaroylshikimate + CoA. Its function is as follows. Acyltransferase involved in the biosynthesis of lignin. The affinity for shikimate as acceptor is 100-fold higher than for quinate. The most efficient donors are caffeoyl-CoA &gt; p-coumaroyl-CoA &gt; feruloyl-CoA &gt;&gt; sinapoyl-CoA. This chain is Shikimate O-hydroxycinnamoyltransferase (HST), found in Nicotiana tabacum (Common tobacco).